A 211-amino-acid polypeptide reads, in one-letter code: MFSYYFQGLALGAAMILPLGPQNAFVMNQGIRRQYHIMIALLCAISDLVLICAGIFGGSALLMQSPWLLALVTWGGVVFLLWYGFGAFKTAMSSNIELASAEVLKQGRWKIIATMLAVTWLNPHVYLDTFVVLGSLGGQLDVEPKRWFALGTISASFLWFFGLAILAAWLAPRLRTAKSQRIINLVVGCVMWFIALQLARDGIAHAQALFS.

6 helical membrane-spanning segments follow: residues 1 to 21, 37 to 57, 68 to 88, 111 to 131, 147 to 167, and 182 to 202; these read MFSY…PLGP, IMIA…GIFG, LLAL…FGAF, IIAT…DTFV, WFAL…AILA, and IINL…ARDG.

Belongs to the LysE/ArgO transporter (TC 2.A.75) family.

The protein resides in the cell inner membrane. It carries out the reaction L-arginine(in) = L-arginine(out). Involved in the export of arginine. Important to control the intracellular level of arginine and the correct balance between arginine and lysine. In Escherichia coli O157:H7, this protein is Arginine exporter protein ArgO.